The following is a 661-amino-acid chain: Ecdysteroid-phosphate phosphatase (661 aa).

Residues 16–57 (KQDVSPLQILLQMGFRRQRALKALAATGNRSVQLASDWLLTH) enclose the UBA domain. The SH3 domain maps to 235-300 (ANHQVYKVTQ…PAVYTRRTAE (66 aa)). Residue Arg409 is part of the active site. The active-site Tele-phosphohistidine intermediate is the His410. The active site involves His590.

As to quaternary structure, homodimer. As to expression, detected in non-diapause eggs, with highest expression between 2 and 5 days after oviposition. Not detected in other tissues tested.

Its subcellular location is the cytoplasm. The protein resides in the cytosol. The catalysed reaction is ecdysone 22-phosphate + H2O = ecdysone + phosphate. It catalyses the reaction 20-hydroxyecdysone 22-phosphate + H2O = 20-hydroxyecdysone + phosphate. It carries out the reaction 2-deoxyecdysone 22-phosphate + H2O = 2-deoxyecdysone + phosphate. The enzyme catalyses O-phospho-L-tyrosyl-[protein] + H2O = L-tyrosyl-[protein] + phosphate. Its activity is regulated as follows. Competitively inhibited by 4-nitrophenyl phosphate (para-nitrophenylphosphate, pNPP). Also inhibited by tungstate, vanadate, and phosphate. Its function is as follows. Steroid phosphatase which catalyzes the conversion of inactive phosphorylated ecdysteroids into their active forms. Shows high activity towards ecdysone 22-phosphate (E22P). Has lower activity towards other ecdysteriod phosphates including 20-hydroxyecdysone 22-phosphate (20E22P) and 2-deoxyecdysone 22-phosphate (2dE22P). Also has protein tyrosine phosphatase activity. The polypeptide is Ecdysteroid-phosphate phosphatase (Bombyx mori (Silk moth)).